Reading from the N-terminus, the 307-residue chain is 2-methoxy-6-polyprenyl-1,4-benzoquinol methylase, mitochondrial (307 aa).

A mitochondrion-targeting transit peptide spans 1–19 (MLISSRIVRSSLVNVPLRL). S-adenosyl-L-methionine contacts are provided by residues Ser122, Asp148, 179 to 180 (NG), and Ser197.

This sequence belongs to the class I-like SAM-binding methyltransferase superfamily. MenG/UbiE family. Component of a multi-subunit COQ enzyme complex, composed of at least COQ3, COQ4, COQ5, COQ6, COQ7 and COQ9. Interacts with COQ3.

It is found in the mitochondrion inner membrane. It catalyses the reaction 2-methoxy-6-(all-trans-hexaprenyl)benzene-1,4-diol + S-adenosyl-L-methionine = 5-methoxy-2-methyl-3-(all-trans-hexaprenyl)benzene-1,4-diol + S-adenosyl-L-homocysteine + H(+). It functions in the pathway cofactor biosynthesis; ubiquinone biosynthesis. Methyltransferase required for the conversion of 2-hexaprenyl-6-methoxy-1,4-benzoquinol (DDMQH2) to 2-hexaprenyl-3-methyl-6-methoxy-1,4-benzoquinol (DMQH2). This Saccharomyces cerevisiae (strain ATCC 204508 / S288c) (Baker's yeast) protein is 2-methoxy-6-polyprenyl-1,4-benzoquinol methylase, mitochondrial.